The sequence spans 488 residues: Probable cytosol aminopeptidase (488 aa).

Positions 254 and 259 each coordinate Mn(2+). Lys-266 is an active-site residue. Residues Asp-277, Asp-336, and Glu-338 each coordinate Mn(2+). The active site involves Arg-340.

This sequence belongs to the peptidase M17 family. It depends on Mn(2+) as a cofactor.

The protein resides in the cytoplasm. It catalyses the reaction Release of an N-terminal amino acid, Xaa-|-Yaa-, in which Xaa is preferably Leu, but may be other amino acids including Pro although not Arg or Lys, and Yaa may be Pro. Amino acid amides and methyl esters are also readily hydrolyzed, but rates on arylamides are exceedingly low.. The catalysed reaction is Release of an N-terminal amino acid, preferentially leucine, but not glutamic or aspartic acids.. Presumably involved in the processing and regular turnover of intracellular proteins. Catalyzes the removal of unsubstituted N-terminal amino acids from various peptides. The polypeptide is Probable cytosol aminopeptidase (Roseiflexus castenholzii (strain DSM 13941 / HLO8)).